The sequence spans 261 residues: MTDSTAPRLHVQALSADCAEAARRWAERLGLPLAADDEAEFAVQVGEEGLQVLQLGPDSPGPVRVDFVEGASAHRRKFGGGSGQMIAKAVGVQPGIRPRVLDATAGLGRDGFVLASLGCEVTLVERQPLIAALLEDGLERAGRDPDVAPIAARMRLLGGNSADLMRAWDGEAPQVVYLDPMFPHRDKSALVKKEMRLFRPLVGDDLDAPALLQAALALASHRVVVKRPRKAPIIEGPKPGYSLEGKSSRYDIYPKKALGKG.

Residues 109-110, 125-126, and D179 contribute to the S-adenosyl-L-methionine site; these read RD and ER.

It belongs to the methyltransferase superfamily. RsmJ family.

It localises to the cytoplasm. It carries out the reaction guanosine(1516) in 16S rRNA + S-adenosyl-L-methionine = N(2)-methylguanosine(1516) in 16S rRNA + S-adenosyl-L-homocysteine + H(+). Functionally, specifically methylates the guanosine in position 1516 of 16S rRNA. The polypeptide is Ribosomal RNA small subunit methyltransferase J (Pseudomonas aeruginosa (strain UCBPP-PA14)).